Reading from the N-terminus, the 212-residue chain is Maleylacetoacetate isomerase (212 aa).

The region spanning 1–83 is the GST N-terminal domain; it reads MKLYTYYRST…YLEERYPQPA (83 aa). Residues 88 to 211 enclose the GST C-terminal domain; that stretch reads DPLRRARERG…HPANQPDTPA (124 aa).

This sequence belongs to the GST superfamily. Zeta family.

The catalysed reaction is 4-maleylacetoacetate = 4-fumarylacetoacetate. It functions in the pathway amino-acid degradation; L-phenylalanine degradation; acetoacetate and fumarate from L-phenylalanine: step 5/6. This Pseudomonas aeruginosa (strain ATCC 15692 / DSM 22644 / CIP 104116 / JCM 14847 / LMG 12228 / 1C / PRS 101 / PAO1) protein is Maleylacetoacetate isomerase (maiA).